The chain runs to 185 residues: Peptidyl-tRNA hydrolase (185 aa).

Tyrosine 14 serves as a coordination point for tRNA. Histidine 19 functions as the Proton acceptor in the catalytic mechanism. Residues phenylalanine 64, asparagine 66, and asparagine 112 each coordinate tRNA.

This sequence belongs to the PTH family. As to quaternary structure, monomer.

It localises to the cytoplasm. It catalyses the reaction an N-acyl-L-alpha-aminoacyl-tRNA + H2O = an N-acyl-L-amino acid + a tRNA + H(+). In terms of biological role, hydrolyzes ribosome-free peptidyl-tRNAs (with 1 or more amino acids incorporated), which drop off the ribosome during protein synthesis, or as a result of ribosome stalling. Functionally, catalyzes the release of premature peptidyl moieties from peptidyl-tRNA molecules trapped in stalled 50S ribosomal subunits, and thus maintains levels of free tRNAs and 50S ribosomes. This Lacticaseibacillus paracasei (strain ATCC 334 / BCRC 17002 / CCUG 31169 / CIP 107868 / KCTC 3260 / NRRL B-441) (Lactobacillus paracasei) protein is Peptidyl-tRNA hydrolase.